A 428-amino-acid polypeptide reads, in one-letter code: 26S proteasome regulatory subunit 7 (428 aa).

Residue 211–218 participates in ATP binding; that stretch reads GPPGTGKT.

The protein belongs to the AAA ATPase family.

It is found in the cytoplasm. Its subcellular location is the nucleus. The 26S proteasome is involved in the ATP-dependent degradation of ubiquitinated proteins. The regulatory (or ATPase) complex confers ATP dependency and substrate specificity to the 26S complex. The polypeptide is 26S proteasome regulatory subunit 7 (psmC2) (Dictyostelium discoideum (Social amoeba)).